A 117-amino-acid polypeptide reads, in one-letter code: Large ribosomal subunit protein bL19 (117 aa).

It belongs to the bacterial ribosomal protein bL19 family.

Its function is as follows. This protein is located at the 30S-50S ribosomal subunit interface and may play a role in the structure and function of the aminoacyl-tRNA binding site. The chain is Large ribosomal subunit protein bL19 from Desulfosudis oleivorans (strain DSM 6200 / JCM 39069 / Hxd3) (Desulfococcus oleovorans).